The chain runs to 447 residues: D-ribitol-5-phosphate cytidylyltransferase (447 aa).

This sequence belongs to the IspD/TarI cytidylyltransferase family. IspD subfamily. Homodimer.

The protein resides in the cytoplasm. It localises to the cytosol. It carries out the reaction D-ribitol 5-phosphate + CTP + H(+) = CDP-L-ribitol + diphosphate. The enzyme catalyses D-ribose 5-phosphate + CTP + H(+) = CDP-D-ribose + diphosphate. It catalyses the reaction D-ribulose 5-phosphate + CTP + H(+) = CDP-D-ribulose + diphosphate. The protein operates within protein modification; protein glycosylation. Its function is as follows. Cytidylyltransferase required for protein O-linked mannosylation. Catalyzes the formation of CDP-ribitol nucleotide sugar from D-ribitol 5-phosphate. CDP-ribitol is a substrate of FKTN during the biosynthesis of the phosphorylated O-mannosyl trisaccharide (N-acetylgalactosamine-beta-3-N-acetylglucosamine-beta-4-(phosphate-6-)mannose), a carbohydrate structure present in alpha-dystroglycan (DAG1), which is required for binding laminin G-like domain-containing extracellular proteins with high affinity. Shows activity toward other pentose phosphate sugars and mediates formation of CDP-ribulose or CDP-ribose using CTP and ribulose-5-phosphate or ribose-5-phosphate, respectively. Not involved in dolichol production. The protein is D-ribitol-5-phosphate cytidylyltransferase (Crppa) of Rattus norvegicus (Rat).